Here is a 459-residue protein sequence, read N- to C-terminus: Probable acetate kinase (459 aa).

Residue Asn-9 participates in Mg(2+) binding. Lys-16 lines the ATP pocket. Arg-100 is a substrate binding site. Asp-156 (proton donor/acceptor) is an active-site residue. Residues 216 to 220 (HLGSG) and 299 to 301 (DFR) each bind ATP. Positions 308-338 (TTTSSPTPSPNPNPNPNPDPNPDPNPDPQNQ) are disordered. Pro residues predominate over residues 314–334 (TPSPNPNPNPNPDPNPDPNPD). Glu-441 contacts Mg(2+).

The protein belongs to the acetokinase family. Mg(2+) serves as cofactor.

The enzyme catalyses acetate + ATP = acetyl phosphate + ADP. It functions in the pathway metabolic intermediate biosynthesis; acetyl-CoA biosynthesis; acetyl-CoA from acetate: step 1/2. This Chaetomium globosum (strain ATCC 6205 / CBS 148.51 / DSM 1962 / NBRC 6347 / NRRL 1970) (Soil fungus) protein is Probable acetate kinase.